Reading from the N-terminus, the 526-residue chain is Peptide chain release factor 3 (526 aa).

In terms of domain architecture, tr-type G spans 9–277 (DKRRTFAIIS…GIVEWAPKPL (269 aa)). GTP contacts are provided by residues 18-25 (SHPDAGKT), 86-90 (DTPGH), and 140-143 (NKLD).

The protein belongs to the TRAFAC class translation factor GTPase superfamily. Classic translation factor GTPase family. PrfC subfamily.

It localises to the cytoplasm. Increases the formation of ribosomal termination complexes and stimulates activities of RF-1 and RF-2. It binds guanine nucleotides and has strong preference for UGA stop codons. It may interact directly with the ribosome. The stimulation of RF-1 and RF-2 is significantly reduced by GTP and GDP, but not by GMP. The polypeptide is Peptide chain release factor 3 (Shewanella baltica (strain OS223)).